A 560-amino-acid polypeptide reads, in one-letter code: Eukaryotic translation initiation factor 3 subunit D-1 (560 aa).

The interval 98-166 (VQKPPHQRGR…RGPPPKMRES (69 aa)) is disordered. Residues 100–121 (KPPHQRGRFRNMRNSRSGRGRN) show a composition bias toward basic residues. A Phosphothreonine modification is found at Thr128. A compositionally biased stretch (basic residues) spans 147–156 (GRGMGKKFGH). Positions 291-305 (EFDLLTVNESSVEPP) are RNA gate.

Belongs to the eIF-3 subunit D family. In terms of assembly, component of the eukaryotic translation initiation factor 3 (eIF-3) complex. The eIF-3 complex interacts with pix.

The protein localises to the cytoplasm. Functionally, mRNA cap-binding component of the eukaryotic translation initiation factor 3 (eIF-3) complex, which is involved in protein synthesis of a specialized repertoire of mRNAs and, together with other initiation factors, stimulates binding of mRNA and methionyl-tRNAi to the 40S ribosome. The eIF-3 complex specifically targets and initiates translation of a subset of mRNAs involved in cell proliferation. In the eIF-3 complex, eif3d specifically recognizes and binds the 7-methylguanosine cap of a subset of mRNAs. In Drosophila simulans (Fruit fly), this protein is Eukaryotic translation initiation factor 3 subunit D-1.